A 278-amino-acid chain; its full sequence is Indole-3-glycerol phosphate synthase (278 aa).

The protein belongs to the TrpC family.

It catalyses the reaction 1-(2-carboxyphenylamino)-1-deoxy-D-ribulose 5-phosphate + H(+) = (1S,2R)-1-C-(indol-3-yl)glycerol 3-phosphate + CO2 + H2O. Its pathway is amino-acid biosynthesis; L-tryptophan biosynthesis; L-tryptophan from chorismate: step 4/5. This chain is Indole-3-glycerol phosphate synthase, found in Pseudomonas aeruginosa (strain UCBPP-PA14).